The sequence spans 340 residues: Ketol-acid reductoisomerase (NADP(+)) (340 aa).

Positions 3-182 (VQMEYEKDVK…GAARVGLLET (180 aa)) constitute a KARI N-terminal Rossmann domain. NADP(+) is bound by residues 26–29 (YGSQ), Arg-49, Ser-53, and 83–86 (DEIQ). His-108 is an active-site residue. Gly-134 contributes to the NADP(+) binding site. Residues 183–328 (TYKEETEEDL…AELRKAMPFV (146 aa)) enclose the KARI C-terminal knotted domain. Mg(2+)-binding residues include Asp-191, Glu-195, Glu-227, and Glu-231. A substrate-binding site is contributed by Ser-252.

Belongs to the ketol-acid reductoisomerase family. It depends on Mg(2+) as a cofactor.

It carries out the reaction (2R)-2,3-dihydroxy-3-methylbutanoate + NADP(+) = (2S)-2-acetolactate + NADPH + H(+). The enzyme catalyses (2R,3R)-2,3-dihydroxy-3-methylpentanoate + NADP(+) = (S)-2-ethyl-2-hydroxy-3-oxobutanoate + NADPH + H(+). Its pathway is amino-acid biosynthesis; L-isoleucine biosynthesis; L-isoleucine from 2-oxobutanoate: step 2/4. It participates in amino-acid biosynthesis; L-valine biosynthesis; L-valine from pyruvate: step 2/4. Functionally, involved in the biosynthesis of branched-chain amino acids (BCAA). Catalyzes an alkyl-migration followed by a ketol-acid reduction of (S)-2-acetolactate (S2AL) to yield (R)-2,3-dihydroxy-isovalerate. In the isomerase reaction, S2AL is rearranged via a Mg-dependent methyl migration to produce 3-hydroxy-3-methyl-2-ketobutyrate (HMKB). In the reductase reaction, this 2-ketoacid undergoes a metal-dependent reduction by NADPH to yield (R)-2,3-dihydroxy-isovalerate. This Streptococcus pneumoniae (strain Hungary19A-6) protein is Ketol-acid reductoisomerase (NADP(+)).